We begin with the raw amino-acid sequence, 229 residues long: Potassium/proton antiporter CemA (229 aa).

The next 3 membrane-spanning stretches (helical) occupy residues 7-27 (LTPL…SLSF), 106-126 (IILH…FFIM), and 189-209 (IISG…KYWI).

It belongs to the CemA family.

Its subcellular location is the plastid. It localises to the chloroplast inner membrane. It carries out the reaction K(+)(in) + H(+)(out) = K(+)(out) + H(+)(in). Contributes to K(+)/H(+) antiport activity by supporting proton efflux to control proton extrusion and homeostasis in chloroplasts in a light-dependent manner to modulate photosynthesis. Prevents excessive induction of non-photochemical quenching (NPQ) under continuous-light conditions. Indirectly promotes efficient inorganic carbon uptake into chloroplasts. This Ceratophyllum demersum (Rigid hornwort) protein is Potassium/proton antiporter CemA.